Consider the following 260-residue polypeptide: Ribonuclease HII (260 aa).

Positions leucine 73–valine 260 constitute an RNase H type-2 domain. A divalent metal cation is bound by residues aspartate 79, glutamate 80, and aspartate 171.

The protein belongs to the RNase HII family. Requires Mn(2+) as cofactor. Mg(2+) serves as cofactor.

It localises to the cytoplasm. It carries out the reaction Endonucleolytic cleavage to 5'-phosphomonoester.. Functionally, endonuclease that specifically degrades the RNA of RNA-DNA hybrids. The polypeptide is Ribonuclease HII (Desulfitobacterium hafniense (strain DSM 10664 / DCB-2)).